A 775-amino-acid chain; its full sequence is Semaphorin-3E (775 aa).

Residues M1–S25 form the signal peptide. The region spanning R32 to F516 is the Sema domain. An N-linked (GlcNAc...) asparagine glycan is attached at N44. A disulfide bridge links C105 with C115. N-linked (GlcNAc...) asparagine glycosylation is present at N126. C133 and C142 form a disulfide bridge. N-linked (GlcNAc...) asparagine glycans are attached at residues N175 and N330. Intrachain disulfides connect C270–C382, C294–C342, and C519–C537. In terms of domain architecture, Ig-like C2-type spans A581 to T669. The N-linked (GlcNAc...) asparagine glycan is linked to N596. A disulfide bridge links C654 with C729.

This sequence belongs to the semaphorin family. As to quaternary structure, interacts with PLXND1. As to expression, detected in neurons in the thalamus. Detected in embryonic vasculature. Developing lungs, developing skeletal elements and ventral horns of the developing neural tube. Correlates positively with tumor progression.

It localises to the secreted. Its function is as follows. Plays an important role in signaling via the cell surface receptor PLXND1. Mediates reorganization of the actin cytoskeleton, leading to the retraction of cell projections. Promotes focal adhesion disassembly and inhibits adhesion of endothelial cells to the extracellular matrix. Regulates angiogenesis, both during embryogenesis and after birth. Can down-regulate sprouting angiogenesis. Required for normal vascular patterning during embryogenesis. Plays an important role in ensuring the specificity of synapse formation. The sequence is that of Semaphorin-3E (Sema3e) from Mus musculus (Mouse).